The chain runs to 333 residues: Large ribosomal subunit protein mL39 (333 aa).

Residues 56–122 form the TGS domain; that stretch reads DKIEVRYLGL…QESCTLQLLN (67 aa). The segment at 311–333 is disordered; sequence SKKPSPARLPNEPFEEQQQLQLS.

This sequence belongs to the mitochondrion-specific ribosomal protein mL39 family. In terms of assembly, component of the mitochondrial ribosome large subunit (39S) which comprises a 16S rRNA and about 50 distinct proteins.

It is found in the mitochondrion. The chain is Large ribosomal subunit protein mL39 (mRpL39) from Drosophila melanogaster (Fruit fly).